A 158-amino-acid chain; its full sequence is NKG2-F type II integral membrane protein (158 aa).

The span at 1 to 12 (MNKQRGTYSEVS) shows a compositional bias: polar residues. Residues 1–30 (MNKQRGTYSEVSLAQDPKRQQRKLKGNKSS) are disordered. Residues 1 to 74 (MNKQRGTYSE…LPPPERLTAE (74 aa)) lie on the Cytoplasmic side of the membrane. A helical transmembrane segment spans residues 75-95 (VLGIICIVLMATVLKTIVLIP). The Extracellular segment spans residues 96–158 (CIGVLEQNNF…VLQRTLICFL (63 aa)).

In terms of assembly, can form disulfide-bonded heterodimer with CD94. As to expression, natural killer cells.

The protein resides in the membrane. May play a role as a receptor for the recognition of MHC class I HLA-E molecules by NK cells. The polypeptide is NKG2-F type II integral membrane protein (KLRC4) (Pan troglodytes (Chimpanzee)).